Reading from the N-terminus, the 182-residue chain is dCTP deaminase, dUMP-forming (182 aa).

Residues 96–101 (RSSIGR), Asp-113, 121–123 (TLE), Gln-142, Tyr-156, and Gln-163 contribute to the dCTP site. Glu-123 (proton donor/acceptor) is an active-site residue.

The protein belongs to the dCTP deaminase family. Homotrimer.

The catalysed reaction is dCTP + 2 H2O = dUMP + NH4(+) + diphosphate. It functions in the pathway pyrimidine metabolism; dUMP biosynthesis; dUMP from dCTP: step 1/1. Bifunctional enzyme that catalyzes both the deamination of dCTP to dUTP and the hydrolysis of dUTP to dUMP without releasing the toxic dUTP intermediate. This Halothermothrix orenii (strain H 168 / OCM 544 / DSM 9562) protein is dCTP deaminase, dUMP-forming.